The chain runs to 378 residues: Spermidine/putrescine import ATP-binding protein PotA (378 aa).

The region spanning 18–248 is the ABC transporter domain; that stretch reads VLLSGISKSF…PKNLFVAGFI (231 aa). 50 to 57 is a binding site for ATP; the sequence is GPSGCGKT.

The protein belongs to the ABC transporter superfamily. Spermidine/putrescine importer (TC 3.A.1.11.1) family. As to quaternary structure, the complex is composed of two ATP-binding proteins (PotA), two transmembrane proteins (PotB and PotC) and a solute-binding protein (PotD).

It localises to the cell inner membrane. The enzyme catalyses ATP + H2O + polyamine-[polyamine-binding protein]Side 1 = ADP + phosphate + polyamineSide 2 + [polyamine-binding protein]Side 1.. In terms of biological role, part of the ABC transporter complex PotABCD involved in spermidine/putrescine import. Responsible for energy coupling to the transport system. The sequence is that of Spermidine/putrescine import ATP-binding protein PotA from Salmonella typhi.